The sequence spans 238 residues: Orotidine 5'-phosphate decarboxylase (238 aa).

Residues Asp10, Lys32, Asp59–Thr68, Thr122, Arg184, Gln193, Gly213, and Arg214 contribute to the substrate site. Lys61 acts as the Proton donor in catalysis.

Belongs to the OMP decarboxylase family. Type 1 subfamily. In terms of assembly, homodimer.

The enzyme catalyses orotidine 5'-phosphate + H(+) = UMP + CO2. The protein operates within pyrimidine metabolism; UMP biosynthesis via de novo pathway; UMP from orotate: step 2/2. Its function is as follows. Catalyzes the decarboxylation of orotidine 5'-monophosphate (OMP) to uridine 5'-monophosphate (UMP). The protein is Orotidine 5'-phosphate decarboxylase of Bacillus cereus (strain ZK / E33L).